A 567-amino-acid polypeptide reads, in one-letter code: Diphtheria toxin (567 aa).

The first 32 residues, 1–32, serve as a signal peptide directing secretion; that stretch reads MLVRGYVVSRKLFASILIGALLGIGAPPSAHA. His-53 and Tyr-97 together coordinate NAD(+). Glu-180 is an active-site residue. Disulfide bonds link Cys-218/Cys-233 and Cys-493/Cys-503.

In terms of assembly, homodimer. In terms of processing, proteolytic activation by host furin cleaves the protein in two parts, Diphtheria toxin fragment A and Diphtheria toxin fragment B; which remain associated via a disulfide bond.

It catalyses the reaction diphthamide-[translation elongation factor 2] + NAD(+) = N-(ADP-D-ribosyl)diphthamide-[translation elongation factor 2] + nicotinamide + H(+). Partially inhibited by 1,8-naphthalimide (NAP). Functionally, diphtheria toxin, produced by a phage infecting Corynebacterium diphtheriae, is a proenzyme that, after activation, catalyzes the covalent attachment of the ADP ribose moiety of NAD to eukaryotic elongation factor 2 (eEF-2). Fragment A is the catalytic portion responsible for enzymatic ADP-ribosylation of elongation factor 2, while fragment B is responsible for binding of toxin to cell receptors and entry of fragment A. This Corynebacterium diphtheriae protein is Diphtheria toxin.